The following is a 222-amino-acid chain: MRIHDIDPDNRPRERFLRSGKEALSPAELLALILRSGTPNLNIIDTCNQLIAEHSLEGLADLSLHELQKIPGIGQAKAMQIAAVFELHRRIRFAKNINRKIQGAQDVFEYMQGRIPDESKEHLFVLFLNTKNRILSHESVTVGTLTSSLIHPREIFKAAIRQSAHSIILVHNHPSGDVQPSNADKQVTSILKKSGDLLQIALLDHVIVGNDDWFSFRDHSLL.

Residues 100 to 222 (KIQGAQDVFE…WFSFRDHSLL (123 aa)) form the MPN domain. H171, H173, and D184 together coordinate Zn(2+). Residues 171–184 (HNHPSGDVQPSNAD) carry the JAMM motif motif.

The protein belongs to the UPF0758 family.

The protein is UPF0758 protein Cpar_0627 of Chlorobaculum parvum (strain DSM 263 / NCIMB 8327) (Chlorobium vibrioforme subsp. thiosulfatophilum).